The chain runs to 92 residues: Small ribosomal subunit protein uS19 (92 aa).

It belongs to the universal ribosomal protein uS19 family.

In terms of biological role, protein S19 forms a complex with S13 that binds strongly to the 16S ribosomal RNA. The chain is Small ribosomal subunit protein uS19 from Thermobifida fusca (strain YX).